The sequence spans 261 residues: Cytochrome c oxidase subunit 3 (261 aa).

Topologically, residues 1–15 are mitochondrial matrix; it reads MAHQAHAYHMVDPSP. The chain crosses the membrane as a helical span at residues 16-34; that stretch reads WPLTGAIAALLLTSGTAVW. At 35–40 the chain is on the mitochondrial intermembrane side; that stretch reads FHFHSL. Residues 41–66 traverse the membrane as a helical segment; the sequence is TLLTLGNILLLLTMYQWWRDIIREGT. Residues 67–72 lie on the Mitochondrial matrix side of the membrane; it reads FQGHHT. Residues 73-105 traverse the membrane as a helical segment; the sequence is PPVQKGLRYGMILFITSEVFFFLGFFWAFYHAS. Topologically, residues 106-128 are mitochondrial intermembrane; it reads LAPTPELGGCWPPTGITTLDPFE. The helical transmembrane segment at 129-152 threads the bilayer; sequence VPLLNTAVLLASGVTVTWAHHSIM. At 153–155 the chain is on the mitochondrial matrix side; sequence EGE. Residues 156-183 form a helical membrane-spanning segment; it reads RKQTIQALTLTILLGFYFTFLQGMEYYE. The Mitochondrial intermembrane segment spans residues 184–190; that stretch reads APFTIAD. Residues 191–223 traverse the membrane as a helical segment; that stretch reads GVYGSTFFVATGFHGLHVIIGSTFLAVCLLRQV. The Mitochondrial matrix portion of the chain corresponds to 224 to 232; sequence QYHFTSEHH. Residues 233 to 256 form a helical membrane-spanning segment; that stretch reads FGFEAAAWYWHFVDVVWLFLYVSI. Residues 257 to 261 lie on the Mitochondrial intermembrane side of the membrane; sequence YWWGS.

The protein belongs to the cytochrome c oxidase subunit 3 family. As to quaternary structure, component of the cytochrome c oxidase (complex IV, CIV), a multisubunit enzyme composed of 14 subunits. The complex is composed of a catalytic core of 3 subunits MT-CO1, MT-CO2 and MT-CO3, encoded in the mitochondrial DNA, and 11 supernumerary subunits COX4I, COX5A, COX5B, COX6A, COX6B, COX6C, COX7A, COX7B, COX7C, COX8 and NDUFA4, which are encoded in the nuclear genome. The complex exists as a monomer or a dimer and forms supercomplexes (SCs) in the inner mitochondrial membrane with NADH-ubiquinone oxidoreductase (complex I, CI) and ubiquinol-cytochrome c oxidoreductase (cytochrome b-c1 complex, complex III, CIII), resulting in different assemblies (supercomplex SCI(1)III(2)IV(1) and megacomplex MCI(2)III(2)IV(2)).

Its subcellular location is the mitochondrion inner membrane. It carries out the reaction 4 Fe(II)-[cytochrome c] + O2 + 8 H(+)(in) = 4 Fe(III)-[cytochrome c] + 2 H2O + 4 H(+)(out). Functionally, component of the cytochrome c oxidase, the last enzyme in the mitochondrial electron transport chain which drives oxidative phosphorylation. The respiratory chain contains 3 multisubunit complexes succinate dehydrogenase (complex II, CII), ubiquinol-cytochrome c oxidoreductase (cytochrome b-c1 complex, complex III, CIII) and cytochrome c oxidase (complex IV, CIV), that cooperate to transfer electrons derived from NADH and succinate to molecular oxygen, creating an electrochemical gradient over the inner membrane that drives transmembrane transport and the ATP synthase. Cytochrome c oxidase is the component of the respiratory chain that catalyzes the reduction of oxygen to water. Electrons originating from reduced cytochrome c in the intermembrane space (IMS) are transferred via the dinuclear copper A center (CU(A)) of subunit 2 and heme A of subunit 1 to the active site in subunit 1, a binuclear center (BNC) formed by heme A3 and copper B (CU(B)). The BNC reduces molecular oxygen to 2 water molecules using 4 electrons from cytochrome c in the IMS and 4 protons from the mitochondrial matrix. The polypeptide is Cytochrome c oxidase subunit 3 (mt-co3) (Oncorhynchus clarkii (Cutthroat trout)).